A 585-amino-acid polypeptide reads, in one-letter code: Glutamate decarboxylase 2 (585 aa).

Positions 1–25 (MASPGSGFWSFGSEDGSGDPENPGT) are disordered. 5 positions are modified to phosphoserine: Ser3, Ser6, Ser10, Ser13, and Ser17. 2 S-palmitoyl cysteine lipidation sites follow: Cys30 and Cys45. 181–183 (QLS) serves as a coordination point for substrate. Lys396 bears the N6-(pyridoxal phosphate)lysine mark. Arg558 contacts substrate.

It belongs to the group II decarboxylase family. In terms of assembly, homodimer. The cofactor is pyridoxal 5'-phosphate. The N-terminus is blocked. In terms of processing, phosphorylated; which does not affect kinetic parameters or subcellular location. Post-translationally, palmitoylated; which is required for presynaptic clustering.

The protein resides in the cytoplasm. The protein localises to the cytosol. It is found in the cytoplasmic vesicle. Its subcellular location is the presynaptic cell membrane. It localises to the golgi apparatus membrane. The catalysed reaction is L-glutamate + H(+) = 4-aminobutanoate + CO2. In terms of biological role, catalyzes the production of GABA. This Rattus norvegicus (Rat) protein is Glutamate decarboxylase 2 (Gad2).